The following is a 71-amino-acid chain: NAD(P)H-quinone oxidoreductase subunit O (71 aa).

This sequence belongs to the complex I NdhO subunit family. NDH-1 can be composed of about 15 different subunits; different subcomplexes with different compositions have been identified which probably have different functions.

It localises to the cellular thylakoid membrane. The catalysed reaction is a plastoquinone + NADH + (n+1) H(+)(in) = a plastoquinol + NAD(+) + n H(+)(out). It carries out the reaction a plastoquinone + NADPH + (n+1) H(+)(in) = a plastoquinol + NADP(+) + n H(+)(out). Its function is as follows. NDH-1 shuttles electrons from an unknown electron donor, via FMN and iron-sulfur (Fe-S) centers, to quinones in the respiratory and/or the photosynthetic chain. The immediate electron acceptor for the enzyme in this species is believed to be plastoquinone. Couples the redox reaction to proton translocation, and thus conserves the redox energy in a proton gradient. Cyanobacterial NDH-1 also plays a role in inorganic carbon-concentration. In Nostoc punctiforme (strain ATCC 29133 / PCC 73102), this protein is NAD(P)H-quinone oxidoreductase subunit O.